We begin with the raw amino-acid sequence, 218 residues long: Probable nicotinate-nucleotide adenylyltransferase (218 aa).

The protein belongs to the NadD family.

It catalyses the reaction nicotinate beta-D-ribonucleotide + ATP + H(+) = deamido-NAD(+) + diphosphate. Its pathway is cofactor biosynthesis; NAD(+) biosynthesis; deamido-NAD(+) from nicotinate D-ribonucleotide: step 1/1. Functionally, catalyzes the reversible adenylation of nicotinate mononucleotide (NaMN) to nicotinic acid adenine dinucleotide (NaAD). The chain is Probable nicotinate-nucleotide adenylyltransferase from Syntrophotalea carbinolica (strain DSM 2380 / NBRC 103641 / GraBd1) (Pelobacter carbinolicus).